A 391-amino-acid chain; its full sequence is Multidrug resistance protein MdtL (391 aa).

A run of 12 helical transmembrane segments spans residues 4–24 (FLIC…MYLV), 42–62 (IAFS…GKVA), 69–89 (PVAI…SLAE), 93–113 (LFLA…VVAF), 131–151 (LLNG…HLIM), 158–178 (SLFW…LFIL), 203–222 (FFLS…LTFV), 245–265 (ALTA…LGIF), 269–289 (TLMI…AVSP), 293–313 (VSLF…GVAM), 331–351 (LGIA…VVGI), and 356–376 (MLIG…MFVA).

The protein belongs to the major facilitator superfamily. DHA1 family. MdtL (TC 2.A.1.2.22) subfamily.

The protein resides in the cell inner membrane. Its function is as follows. Confers resistance to chloramphenicol. This is Multidrug resistance protein MdtL from Escherichia coli O17:K52:H18 (strain UMN026 / ExPEC).